Consider the following 460-residue polypeptide: Retinoic acid receptor alpha (460 aa).

The segment at 1-87 (MASNSSSCPT…PPPLPRIYKP (87 aa)) is modulating. The segment at 46 to 78 (HQLPVSGYSTPSPATVETQSTSSEEIVPSPPSP) is disordered. Positions 52–69 (GYSTPSPATVETQSTSSE) are enriched in polar residues. 2 consecutive NR C4-type zinc fingers follow at residues 88 to 108 (CFVC…CEGC) and 124 to 148 (CHRD…LQKC). The nuclear receptor DNA-binding region spans 88–153 (CFVCQDKSSG…RLQKCFEVGM (66 aa)). Residues 154–182 (SKESVRNDRNKKKKDVPKTECSESYIVTP) are hinge. The NR LBD domain occupies 183-417 (EVEELIEKVR…PLIQEMLENS (235 aa)). The 9aaTAD signature appears at 408 to 416 (PLIQEMLEN). A disordered region spans residues 418–460 (EGMDTLGGQPGGPRTGGLGPPPGSCSPSLSPSSTRSSPATHSP). Gly residues predominate over residues 425-435 (GQPGGPRTGGL). Positions 442 to 460 (CSPSLSPSSTRSSPATHSP) are enriched in low complexity.

The protein belongs to the nuclear hormone receptor family. NR1 subfamily. Heterodimer; with an RXR molecule. Binds DNA preferentially as a RAR/RXR heterodimer. As to expression, ubiquitous.

It localises to the nucleus. Functionally, receptor for retinoic acid. Retinoic acid receptors bind as heterodimers to their target response elements in response to their ligands, all-trans or 9-cis retinoic acid, and regulate gene expression in various biological processes. The RAR/RXR heterodimers bind to the retinoic acid response elements (RARE) composed of tandem 5'-AGGTCA-3' sites known as DR1-DR5. Required for hindbrain patterning and appears to be required for skin development. The sequence is that of Retinoic acid receptor alpha (RARA) from Gallus gallus (Chicken).